The following is a 422-amino-acid chain: Serine hydroxymethyltransferase (422 aa).

121-123 (GHI) contacts (6S)-5,6,7,8-tetrahydrofolate. K227 carries the post-translational modification N6-(pyridoxal phosphate)lysine. E245 provides a ligand contact to (6S)-5,6,7,8-tetrahydrofolate.

It belongs to the SHMT family. Homodimer. Pyridoxal 5'-phosphate serves as cofactor.

The protein resides in the cytoplasm. The catalysed reaction is 5,10-methylenetetrahydromethanopterin + glycine + H2O = 5,6,7,8-tetrahydromethanopterin + L-serine. The protein operates within amino-acid biosynthesis; glycine biosynthesis; glycine from L-serine: step 1/1. Its function is as follows. Catalyzes the reversible interconversion of serine and glycine with tetrahydromethanopterin (H4MPT) serving as the one-carbon carrier. Also exhibits a pteridine-independent aldolase activity toward beta-hydroxyamino acids, producing glycine and aldehydes, via a retro-aldol mechanism. In Methanobrevibacter smithii (strain ATCC 35061 / DSM 861 / OCM 144 / PS), this protein is Serine hydroxymethyltransferase.